The primary structure comprises 349 residues: Probable L-asparaginase periplasmic (349 aa).

An N-terminal signal peptide occupies residues Met-1–Ala-21. Residues Pro-25 to Phe-349 enclose the Asparaginase/glutaminase domain. Thr-35 functions as the O-isoaspartyl threonine intermediate in the catalytic mechanism. Residues Ser-81 and Thr-112 to Asp-113 contribute to the substrate site. Cys-100 and Cys-128 are disulfide-bonded.

The protein belongs to the asparaginase 1 family.

Its subcellular location is the periplasm. It carries out the reaction L-asparagine + H2O = L-aspartate + NH4(+). The protein is Probable L-asparaginase periplasmic (ansB) of Haemophilus influenzae (strain ATCC 51907 / DSM 11121 / KW20 / Rd).